Consider the following 293-residue polypeptide: Biphenyl-2,3-diol 1,2-dioxygenase (293 aa).

VOC domains lie at 5–119 and 143–265; these read RLGY…IYYG and GIGH…FGWG. His-146, His-210, and Glu-261 together coordinate Fe cation.

It belongs to the extradiol ring-cleavage dioxygenase family. Homooctamer. Fe(2+) serves as cofactor.

It carries out the reaction biphenyl-2,3-diol + O2 = 2-hydroxy-6-oxo-6-phenylhexa-2,4-dienoate + H(+). It participates in xenobiotic degradation; biphenyl degradation; 2-hydroxy-2,4-pentadienoate and benzoate from biphenyl: step 3/4. In Pseudomonas sp. (strain KKS102), this protein is Biphenyl-2,3-diol 1,2-dioxygenase (bphC).